The chain runs to 154 residues: Methylglyoxal synthase (154 aa).

The region spanning 6-154 (GALPSRKQIA…AYIAERTKKL (149 aa)) is the MGS-like domain. Substrate contacts are provided by residues His19, Lys23, 45–48 (TGTT), and 65–66 (SG). Asp71 (proton donor/acceptor) is an active-site residue. Substrate is bound at residue His98.

The protein belongs to the methylglyoxal synthase family.

The catalysed reaction is dihydroxyacetone phosphate = methylglyoxal + phosphate. Functionally, catalyzes the formation of methylglyoxal from dihydroxyacetone phosphate. The sequence is that of Methylglyoxal synthase from Saccharophagus degradans (strain 2-40 / ATCC 43961 / DSM 17024).